The following is a 366-amino-acid chain: Chorismate synthase (366 aa).

NADP(+)-binding residues include R48 and R54. Residues 129 to 131, 241 to 242, G290, 305 to 309, and R331 each bind FMN; these read RSS, NA, and KPTSS.

Belongs to the chorismate synthase family. As to quaternary structure, homotetramer. FMNH2 is required as a cofactor.

The enzyme catalyses 5-O-(1-carboxyvinyl)-3-phosphoshikimate = chorismate + phosphate. It functions in the pathway metabolic intermediate biosynthesis; chorismate biosynthesis; chorismate from D-erythrose 4-phosphate and phosphoenolpyruvate: step 7/7. Functionally, catalyzes the anti-1,4-elimination of the C-3 phosphate and the C-6 proR hydrogen from 5-enolpyruvylshikimate-3-phosphate (EPSP) to yield chorismate, which is the branch point compound that serves as the starting substrate for the three terminal pathways of aromatic amino acid biosynthesis. This reaction introduces a second double bond into the aromatic ring system. This Nitrobacter hamburgensis (strain DSM 10229 / NCIMB 13809 / X14) protein is Chorismate synthase.